The chain runs to 203 residues: Twist-related protein 1 (203 aa).

Positions 1–18 (MMQDVSSSPVSPADDSLS) are enriched in low complexity. The disordered stretch occupies residues 1–107 (MMQDVSSSPV…GGSPQSCEEL (107 aa)). The span at 34 to 43 (RGGRKRRSSR) shows a compositional bias: basic residues. 2 stretches are compositionally biased toward gly residues: residues 46 to 65 (AGGG…GGDE) and 80 to 100 (GCGG…GGGS). Residues 109-160 (TQRVMANVRERQRTQSLNEPFAALRKIIPTLPSDKLSKIQTLKLAARYIDFL) form the bHLH domain. The interval 162 to 192 (RVLQSDELDSKTASCSYVAHEWLSYAFSVWR) is sufficient for transactivation activity.

Efficient DNA binding requires dimerization with another bHLH protein. Homodimer or heterodimer with E proteins such as TCF3. ID1 binds preferentially to TCF3 but does not interact efficiently with TWIST1 so ID1 levels control the amount of TCF3 available to dimerize with TWIST and thus determine the type of dimer formed.

The protein localises to the nucleus. Acts as a transcriptional regulator. Inhibits myogenesis by sequestrating E proteins, inhibiting trans-activation by MEF2, and inhibiting DNA-binding by MYOD1 through physical interaction. This interaction probably involves the basic domains of both proteins. Also represses expression of pro-inflammatory cytokines such as TNFA and IL1B. Regulates cranial suture patterning and fusion. Activates transcription as a heterodimer with E proteins. Regulates gene expression differentially, depending on dimer composition. Homodimers induce expression of FGFR2 and POSTN while heterodimers repress FGFR2 and POSTN expression and induce THBS1 expression. Heterodimerization is also required for osteoblast differentiation. Represses the activity of the circadian transcriptional activator: NPAS2-BMAL1 heterodimer. This Gorilla gorilla gorilla (Western lowland gorilla) protein is Twist-related protein 1 (TWIST1).